The chain runs to 357 residues: 3-isopropylmalate dehydrogenase (357 aa).

Positions 97, 107, 135, and 224 each coordinate substrate. The Mg(2+) site is built by Asp224, Asp248, and Asp252. 282-294 is an NAD(+) binding site; the sequence is GSAPDIAGKNIAN.

It belongs to the isocitrate and isopropylmalate dehydrogenases family. LeuB type 1 subfamily. In terms of assembly, homodimer. Mg(2+) is required as a cofactor. It depends on Mn(2+) as a cofactor.

It localises to the cytoplasm. It catalyses the reaction (2R,3S)-3-isopropylmalate + NAD(+) = 4-methyl-2-oxopentanoate + CO2 + NADH. It participates in amino-acid biosynthesis; L-leucine biosynthesis; L-leucine from 3-methyl-2-oxobutanoate: step 3/4. In terms of biological role, catalyzes the oxidation of 3-carboxy-2-hydroxy-4-methylpentanoate (3-isopropylmalate) to 3-carboxy-4-methyl-2-oxopentanoate. The product decarboxylates to 4-methyl-2 oxopentanoate. The chain is 3-isopropylmalate dehydrogenase from Prochlorococcus marinus (strain MIT 9312).